The chain runs to 141 residues: Lutropin subunit beta (141 aa).

An N-terminal signal peptide occupies residues 1–20; that stretch reads MEMLQGLLLWLLLSMGGARA. 6 disulfides stabilise this stretch: Cys29–Cys77, Cys43–Cys92, Cys46–Cys130, Cys54–Cys108, Cys58–Cys110, and Cys113–Cys120. Asn33 and Asn50 each carry an N-linked (GlcNAc...) asparagine glycan.

It belongs to the glycoprotein hormones subunit beta family. In terms of assembly, heterodimer of a common alpha chain and a unique beta chain which confers biological specificity to thyrotropin, lutropin, follitropin and gonadotropin.

It is found in the secreted. Promotes spermatogenesis and ovulation by stimulating the testes and ovaries to synthesize steroids. The polypeptide is Lutropin subunit beta (LHB) (Macaca fascicularis (Crab-eating macaque)).